A 447-amino-acid chain; its full sequence is Growth/differentiation factor 7 (447 aa).

The first 19 residues, 1 to 19, serve as a signal peptide directing secretion; that stretch reads MDLSAAAALCLWLLSACRP. Positions 20 to 318 are excised as a propeptide; sequence RDGLEAAAVL…AVTAGRRRRR (299 aa). Asparagine 80 is a glycosylation site (N-linked (GlcNAc...) asparagine). Positions 292-346 are disordered; that stretch reads LAAQPPPDPGTGTGSPRAVTAGRRRRRTALAGTRTAQGSGGGAGRGHGRRGRSRC. The segment covering 337–346 has biased composition (basic residues); the sequence is GHGRRGRSRC. Cystine bridges form between cysteine 346/cysteine 412, cysteine 375/cysteine 444, and cysteine 379/cysteine 446.

It belongs to the TGF-beta family. In terms of assembly, homodimer; disulfide-linked. In terms of tissue distribution, highly expressed in the primary aera of brain neocortex.

The protein localises to the secreted. May play an active role in the motor area of the primate neocortex. The chain is Growth/differentiation factor 7 (GDF7) from Chlorocebus aethiops (Green monkey).